The primary structure comprises 402 residues: Speedy protein E2 (402 aa).

The interval 1–89 is disordered; that stretch reads MDRTETRFRK…EEPEKELAPE (89 aa). Polar residues predominate over residues 16–39; that stretch reads GKITTSRQPHPQNEQSPQRSTSGY. The span at 76–89 shows a compositional bias: acidic residues; it reads DESEEEPEKELAPE.

Belongs to the Speedy/Ringo family.

The polypeptide is Speedy protein E2 (SPDYE2) (Homo sapiens (Human)).